The chain runs to 213 residues: Major fimbrial subunit (213 aa).

Residues 1 to 20 (MKKTLLGSLILLAFAGNVQA) form the signal peptide. An intrachain disulfide couples C41 to C81.

This sequence belongs to the fimbrial protein family.

The protein resides in the fimbrium. Mediates adherence to oropharyngeal epithelial cells. Helps the airway colonization process. This Haemophilus influenzae protein is Major fimbrial subunit (hifA).